A 54-amino-acid polypeptide reads, in one-letter code: UPF0391 membrane protein Bpet1858 (54 aa).

Helical transmembrane passes span Ala5–Ala25 and Ala27–Leu47.

It belongs to the UPF0391 family.

It is found in the cell membrane. In Bordetella petrii (strain ATCC BAA-461 / DSM 12804 / CCUG 43448), this protein is UPF0391 membrane protein Bpet1858.